The sequence spans 429 residues: Zinc-regulated GTPase metalloprotein activator 1 (429 aa).

Positions 15–22 (GELPCLVT) match the psi-PxLVp motif motif. Residue 78–85 (GYLGSGKS) participates in GTP binding. Residues cysteine 136, cysteine 138, and cysteine 139 each coordinate Zn(2+). Positions 136–139 (CLCC) match the CXCC motif motif. Residues 139–143 (CSLKN) and 244–247 (NKYD) each bind GTP. Positions 362-428 (RDWEVQRTKG…SIEELLRKTL (67 aa)) constitute a CobW C-terminal domain.

This sequence belongs to the SIMIBI class G3E GTPase family. ZNG1 subfamily.

The enzyme catalyses GTP + H2O = GDP + phosphate + H(+). Zinc chaperone that directly transfers zinc cofactor to target metalloproteins, thereby activating them. Catalyzes zinc insertion into the active site of methionine aminopeptidase MAP1, which function to cleave the initiator methionine from polypeptides during or after protein translation. Mechanistically, the N-terminal psi-PxLVp motif binds to the C6H2-type zinc finger of inactive form of MAP1. After formation of the docked complex, zinc is transferred from the CXCC motif in the GTPase domain of ZNG1 to the zinc binding site in the peptidase domain of MAP1 in a process requiring GTP hydrolysis. GTP/GDP exchange is required for release of active MAP1. The chain is Zinc-regulated GTPase metalloprotein activator 1 from Saccharomyces cerevisiae (strain ATCC 204508 / S288c) (Baker's yeast).